Reading from the N-terminus, the 132-residue chain is Large ribosomal subunit protein bL12 (132 aa).

The disordered stretch occupies residues 112–132 (KEAADKAKTQLEGAGGTINLK).

This sequence belongs to the bacterial ribosomal protein bL12 family. In terms of assembly, homodimer. Part of the ribosomal stalk of the 50S ribosomal subunit. Forms a multimeric L10(L12)X complex, where L10 forms an elongated spine to which 2 to 4 L12 dimers bind in a sequential fashion. Binds GTP-bound translation factors.

Functionally, forms part of the ribosomal stalk which helps the ribosome interact with GTP-bound translation factors. Is thus essential for accurate translation. This is Large ribosomal subunit protein bL12 from Leifsonia xyli subsp. xyli (strain CTCB07).